The chain runs to 93 residues: Alpha-defensin 15 (93 aa).

Positions 1 to 19 (MKTLVLLSALVLLAFQVQA) are cleaved as a signal peptide. Residues 20–58 (DPIQNTDEETKTEEQPGEDDQAVSVSFGDPEGSSLQEES) constitute a propeptide that is removed on maturation. Residues 23-56 (QNTDEETKTEEQPGEDDQAVSVSFGDPEGSSLQE) are disordered. 3 disulfides stabilise this stretch: cysteine 64/cysteine 92, cysteine 66/cysteine 81, and cysteine 71/cysteine 91.

Belongs to the alpha-defensin family. Paneth cells of the small bowel.

The protein localises to the secreted. Probably contributes to the antimicrobial barrier function of the small bowel mucosa. The chain is Alpha-defensin 15 (Defa15) from Mus musculus (Mouse).